The sequence spans 83 residues: Exodeoxyribonuclease 7 small subunit (83 aa).

It belongs to the XseB family. Heterooligomer composed of large and small subunits.

The protein localises to the cytoplasm. It carries out the reaction Exonucleolytic cleavage in either 5'- to 3'- or 3'- to 5'-direction to yield nucleoside 5'-phosphates.. Functionally, bidirectionally degrades single-stranded DNA into large acid-insoluble oligonucleotides, which are then degraded further into small acid-soluble oligonucleotides. The sequence is that of Exodeoxyribonuclease 7 small subunit from Sinorhizobium medicae (strain WSM419) (Ensifer medicae).